We begin with the raw amino-acid sequence, 253 residues long: Triosephosphate isomerase, cytosolic (253 aa).

Residues Asn-10 and Lys-12 each contribute to the substrate site. His-96 acts as the Electrophile in catalysis. Catalysis depends on Glu-166, which acts as the Proton acceptor.

The protein belongs to the triosephosphate isomerase family. In terms of assembly, homodimer. In terms of tissue distribution, starchy endosperm.

It is found in the cytoplasm. It catalyses the reaction D-glyceraldehyde 3-phosphate = dihydroxyacetone phosphate. The protein operates within carbohydrate biosynthesis; gluconeogenesis. It functions in the pathway carbohydrate degradation; glycolysis; D-glyceraldehyde 3-phosphate from glycerone phosphate: step 1/1. The polypeptide is Triosephosphate isomerase, cytosolic (Hordeum vulgare (Barley)).